The chain runs to 237 residues: 2-C-methyl-D-erythritol 4-phosphate cytidylyltransferase (237 aa).

The protein belongs to the IspD/TarI cytidylyltransferase family. IspD subfamily. As to quaternary structure, homodimer.

The enzyme catalyses 2-C-methyl-D-erythritol 4-phosphate + CTP + H(+) = 4-CDP-2-C-methyl-D-erythritol + diphosphate. Its pathway is isoprenoid biosynthesis; isopentenyl diphosphate biosynthesis via DXP pathway; isopentenyl diphosphate from 1-deoxy-D-xylulose 5-phosphate: step 2/6. Its function is as follows. Catalyzes the formation of 4-diphosphocytidyl-2-C-methyl-D-erythritol from CTP and 2-C-methyl-D-erythritol 4-phosphate (MEP). The chain is 2-C-methyl-D-erythritol 4-phosphate cytidylyltransferase from Pectobacterium atrosepticum (strain SCRI 1043 / ATCC BAA-672) (Erwinia carotovora subsp. atroseptica).